A 312-amino-acid polypeptide reads, in one-letter code: Porphobilinogen deaminase (312 aa).

S-(dipyrrolylmethanemethyl)cysteine is present on Cys243.

This sequence belongs to the HMBS family. As to quaternary structure, monomer. Dipyrromethane serves as cofactor.

The catalysed reaction is 4 porphobilinogen + H2O = hydroxymethylbilane + 4 NH4(+). Its pathway is porphyrin-containing compound metabolism; protoporphyrin-IX biosynthesis; coproporphyrinogen-III from 5-aminolevulinate: step 2/4. Its function is as follows. Tetrapolymerization of the monopyrrole PBG into the hydroxymethylbilane pre-uroporphyrinogen in several discrete steps. This chain is Porphobilinogen deaminase, found in Vibrio campbellii (strain ATCC BAA-1116).